The primary structure comprises 1186 residues: MYND-type zinc finger-containing chromatin reader ZMYND8 (1186 aa).

Positions 1 to 12 (MDISTRSKDPGS) are enriched in basic and acidic residues. A disordered region spans residues 1-57 (MDISTRSKDPGSAERTAQKRKFPSPPHSSNGHSPQDTSTSPIKKKKKPGLLNSNNKE). The tract at residues 1-850 (MDISTRSKDP…QQQQQQQNQQ (850 aa)) is required for interaction with CCNT1. Ser-12 is covalently cross-linked (Glycyl lysine isopeptide (Lys-Gly) (interchain with G-Cter in SUMO2)). Ser-24 is modified (phosphoserine). Glycyl lysine isopeptide (Lys-Gly) (interchain with G-Cter in SUMO2) cross-links involve residues Lys-56 and Lys-70. The tract at residues 75-268 (TDPVDVVPQD…YLAACQKRDN (194 aa)) is interaction with histone H3K4me0. The interval 75-406 (TDPVDVVPQD…VKLNFDMTAS (332 aa)) is interaction with histone H3K14ac. The PHD-type zinc finger occupies 88–133 (DFYCWVCHREGQVLCCELCPRVYHAKCLRLTSEPEGDWFCPECEKI). A required for interaction with histone H3 and histone H4 region spans residues 88–327 (DFYCWVCHRE…INNCYLMSKE (240 aa)). Cys-91, Cys-94, Cys-103, Cys-106, His-111, Cys-114, Cys-127, and Cys-130 together coordinate Zn(2+). The 108-residue stretch at 145 to 252 (AMTMLTIEQL…KICEHEMNEI (108 aa)) folds into the Bromo domain. Positions 255, 258, and 274 each coordinate Zn(2+). The region spanning 277–327 (PHPLVWAKLKGFPFWPAKALRDKDGQVDARFFGQHDRAWVPINNCYLMSKE) is the PWWP domain. Lys-390 participates in a covalent cross-link: Glycyl lysine isopeptide (Lys-Gly) (interchain with G-Cter in SUMO2). Thr-404 is subject to Phosphothreonine. A Phosphoserine modification is found at Ser-406. A disordered region spans residues 412–512 (SKPVLSGGTG…TTKTDKTSTT (101 aa)). Lys-413 is modified (N6-acetyllysine; alternate). Lys-413 participates in a covalent cross-link: Glycyl lysine isopeptide (Lys-Gly) (interchain with G-Cter in SUMO2); alternate. Phosphoserine is present on residues Ser-417, Ser-425, and Ser-432. Positions 433–442 (PMSTNSSVHT) are enriched in polar residues. The residue at position 444 (Ser-444) is a Phosphoserine. Residue Lys-453 forms a Glycyl lysine isopeptide (Lys-Gly) (interchain with G-Cter in SUMO2) linkage. Residues Ser-460, Ser-462, Ser-465, Ser-486, Ser-490, and Ser-495 each carry the phosphoserine modification. Over residues 472–489 (STASPASTKTGQAGSLSG) the composition is skewed to polar residues. Lys-505 is covalently cross-linked (Glycyl lysine isopeptide (Lys-Gly) (interchain with G-Cter in SUMO2)). 2 positions are modified to phosphoserine: Ser-514 and Ser-523. Lys-530 participates in a covalent cross-link: Glycyl lysine isopeptide (Lys-Gly) (interchain with G-Cter in SUMO2). Thr-541 carries the post-translational modification Phosphothreonine. Ser-547 carries the phosphoserine modification. Residue Lys-549 forms a Glycyl lysine isopeptide (Lys-Gly) (interchain with G-Cter in SUMO2) linkage. The residue at position 563 (Thr-563) is a Phosphothreonine. The segment at 582–884 (TAVEHSDSED…ITQSPSTSTI (303 aa)) is disordered. 2 stretches are compositionally biased toward basic and acidic residues: residues 585 to 597 (EHSDSEDSEKSDS) and 606 to 631 (DEQKSKNEPEDTEDKEGCQMDKEPSA). Residues Lys-611 and Lys-645 each participate in a glycyl lysine isopeptide (Lys-Gly) (interchain with G-Cter in SUMO2) cross-link. Ser-652 and Ser-655 each carry phosphoserine. The segment covering 656-696 (EKADPGAVKDKASPEPEKDFSEKAKPSPHPIKDKLKGKDET) has biased composition (basic and acidic residues). Lys-657 is covalently cross-linked (Glycyl lysine isopeptide (Lys-Gly) (interchain with G-Cter in SUMO2)). Ser-668, Ser-682, Ser-707, Ser-709, and Ser-737 each carry phosphoserine. The segment covering 718-738 (GEDHSGREGRKNKKEPKEPSP) has biased composition (basic and acidic residues). A Phosphothreonine modification is found at Thr-746. Phosphoserine occurs at positions 754 and 756. Low complexity predominate over residues 766 to 799 (SSAQTSAAGATATTSTSSTVTVTAPAPAATGSPV). A compositionally biased stretch (polar residues) spans 818–832 (VWNSSSKFQTSSQKW). The segment covering 835-857 (QKMQRQQQQQQQQNQQQQPQSSQ) has biased composition (low complexity). Positions 873–884 (KEITQSPSTSTI) are enriched in polar residues. The tract at residues 875–1047 (ITQSPSTSTI…YCCWNTSYCD (173 aa)) is required for homodimerization. Positions 1028, 1031, 1039, 1040, 1046, 1050, 1058, and 1062 each coordinate Zn(2+). The segment at 1028–1062 (CANCKKEAIFYCCWNTSYCDYPCQQAHWPEHMKSC) adopts an MYND-type zinc-finger fold. A required for recruitment to DNA damage sites and for interaction with the NuRD complex, CHD4, HDAC1, HDAC2 and KDM1A region spans residues 1028 to 1062 (CANCKKEAIFYCCWNTSYCDYPCQQAHWPEHMKSC). The tract at residues 1071-1186 (QEADAEVNTE…KESRLDTFWD (116 aa)) is disordered. Residues 1085-1103 (SSQGSSSSTQSAPSETASA) are compositionally biased toward low complexity. Over residues 1104 to 1116 (SKEKETSAEKSKE) the composition is skewed to basic and acidic residues. Lys-1115 is covalently cross-linked (Glycyl lysine isopeptide (Lys-Gly) (interchain with G-Cter in SUMO2)). Position 1119 is a phosphoserine (Ser-1119). Positions 1121 to 1140 (LDLSGSRETPSSILLGSNQG) are enriched in polar residues. Phosphoserine is present on Ser-1141. The tract at residues 1147 to 1186 (NKSSWSSSDEKRGSTRSDHNTSTSTKSLLPKESRLDTFWD) is interaction with PRKCB1. Composition is skewed to basic and acidic residues over residues 1154–1165 (SDEKRGSTRSDH) and 1175–1186 (LPKESRLDTFWD).

As to quaternary structure, monomer and homodimer. Interacts with NuRD subcomplexes containing GATAD2A. Interacts with the histone deacetylase NuRD complex subunit CHD4; the interaction is direct, appears to occur with monomeric ZMYND8, and is increased following DNA damage. Interacts (via N-terminus) with the P-TEFb complex subunit CCNT1 (via central region); the interaction is direct and the association appears to occur between homodimeric ZMYND8 and the activated form of the P-TEFb complex. Interacts (via N-terminus) with DBN1 (via ADF-H domain); the interaction leads to sequestering of ZMYND8 in the cytoplasm. Interacts with the P-TEFb complex subunit CDK9; the association appears to occur between homodimeric ZMYND8 and the activated form of the P-TEFb complex. Interacts with EZH2; the interaction is dependent on the presence of chromatin. Interacts (via MYND domain) with the NuRD complex subunit GATAD2A. Interacts with histone H3 (via N-terminus) that is both methylated at 'Lys-4' (H3K4me1) and acetylated at 'Lys-14' (H3K14ac), with histone H3 (via N-terminus) unmodified at 'Lys-4' (H3K4me0) and acetylated at 'Lys-14' (H3K14ac), and with histone H3 (via N-terminus) di-methylated at 'Lys-36' (H3K36me2). Interacts (via Bromo domain) with histone H4 acetylated at 'Lys-16' (H4K16ac). Interacts with HDAC1. Interacts with HDAC2. Interacts with KDM1A. Interacts with KDM5C. Interacts with KDM5D. Interacts in vitro with PRKCB. Interacts with RNA polymerase II subunit POLR2A phosphorylated at 'Ser-5'. Interacts with ZNF592. Interacts with ZNF687. Does not interact with GATAD2B. As to expression, expressed in neurons (at protein level). Absent in astrocytes (at protein level). Expressed in all tissues examined with highest expression in brain, lung, pancreas, and placenta. Expressed in cutaneous T-cell lymphomas (CTCL).

It is found in the nucleus. The protein localises to the chromosome. Its subcellular location is the cytoplasm. Functionally, chromatin reader that recognizes dual histone modifications such as histone H3.1 dimethylated at 'Lys-36' and histone H4 acetylated at 'Lys-16' (H3.1K36me2-H4K16ac) and histone H3 methylated at 'Lys-4' and histone H4 acetylated at 'Lys-14' (H3K4me1-H3K14ac). May act as a transcriptional corepressor for KDM5D by recognizing the dual histone signature H3K4me1-H3K14ac. May also act as a transcriptional corepressor for KDM5C and EZH2. Recognizes acetylated histone H4 and recruits the NuRD chromatin remodeling complex to damaged chromatin for transcriptional repression and double-strand break repair by homologous recombination. Also activates transcription elongation by RNA polymerase II through recruiting the P-TEFb complex to target promoters. Localizes to H3.1K36me2-H4K16ac marks at all-trans-retinoic acid (ATRA)-responsive genes and positively regulates their expression. Promotes neuronal differentiation by associating with regulatory regions within the MAPT gene, to enhance transcription of a protein-coding MAPT isoform and suppress the non-coding MAPT213 isoform. Suppresses breast cancer, and prostate cancer cell invasion and metastasis. This chain is MYND-type zinc finger-containing chromatin reader ZMYND8 (ZMYND8), found in Homo sapiens (Human).